A 301-amino-acid polypeptide reads, in one-letter code: Mitochondrial thiamine pyrophosphate carrier 1 (301 aa).

Solcar repeat units follow at residues V15 to S102, S115 to L200, and R206 to F293. A run of 6 helical transmembrane segments spans residues A20–L38, V79–I99, L121–L141, I172–W192, V207–F227, and I252–S272.

This sequence belongs to the mitochondrial carrier (TC 2.A.29) family.

Its subcellular location is the mitochondrion inner membrane. Mitochondrial transporter that mediates uptake of thiamine pyrophosphate (ThPP) into mitochondria. The sequence is that of Mitochondrial thiamine pyrophosphate carrier 1 (TPC1) from Candida albicans (strain SC5314 / ATCC MYA-2876) (Yeast).